The chain runs to 101 residues: NAD(P)H-quinone oxidoreductase subunit 4L, chloroplastic (101 aa).

The next 3 membrane-spanning stretches (helical) occupy residues 2–22, 32–52, and 61–81; these read ILEH…YGLI, MCLE…SDFF, and IFSI…LAIV.

Belongs to the complex I subunit 4L family. NDH is composed of at least 16 different subunits, 5 of which are encoded in the nucleus.

The protein localises to the plastid. It is found in the chloroplast thylakoid membrane. The enzyme catalyses a plastoquinone + NADH + (n+1) H(+)(in) = a plastoquinol + NAD(+) + n H(+)(out). The catalysed reaction is a plastoquinone + NADPH + (n+1) H(+)(in) = a plastoquinol + NADP(+) + n H(+)(out). NDH shuttles electrons from NAD(P)H:plastoquinone, via FMN and iron-sulfur (Fe-S) centers, to quinones in the photosynthetic chain and possibly in a chloroplast respiratory chain. The immediate electron acceptor for the enzyme in this species is believed to be plastoquinone. Couples the redox reaction to proton translocation, and thus conserves the redox energy in a proton gradient. This Nicotiana sylvestris (Wood tobacco) protein is NAD(P)H-quinone oxidoreductase subunit 4L, chloroplastic.